Consider the following 732-residue polypeptide: 1,4-alpha-glucan branching enzyme GlgB (732 aa).

The active-site Nucleophile is Asp412. Residue Glu465 is the Proton donor of the active site.

This sequence belongs to the glycosyl hydrolase 13 family. GlgB subfamily. In terms of assembly, monomer.

The catalysed reaction is Transfers a segment of a (1-&gt;4)-alpha-D-glucan chain to a primary hydroxy group in a similar glucan chain.. Its pathway is glycan biosynthesis; glycogen biosynthesis. Catalyzes the formation of the alpha-1,6-glucosidic linkages in glycogen by scission of a 1,4-alpha-linked oligosaccharide from growing alpha-1,4-glucan chains and the subsequent attachment of the oligosaccharide to the alpha-1,6 position. This chain is 1,4-alpha-glucan branching enzyme GlgB, found in Pseudomonas aeruginosa (strain ATCC 15692 / DSM 22644 / CIP 104116 / JCM 14847 / LMG 12228 / 1C / PRS 101 / PAO1).